The sequence spans 330 residues: ATP-dependent (S)-NAD(P)H-hydrate dehydratase (330 aa).

The region spanning 36–327 (VIPLVRNTIP…QEINSAFKKL (292 aa)) is the YjeF C-terminal domain. Residues G136 and 189–195 (NFMEFTR) contribute to the (6S)-NADPHX site. ATP contacts are provided by residues 229–233 (KGEED) and 248–257 (GSGRRCGGQG). (6S)-NADPHX is bound at residue D258.

The protein belongs to the NnrD/CARKD family. The cofactor is Mg(2+).

It carries out the reaction (6S)-NADHX + ATP = ADP + phosphate + NADH + H(+). The enzyme catalyses (6S)-NADPHX + ATP = ADP + phosphate + NADPH + H(+). In terms of biological role, catalyzes the dehydration of the S-form of NAD(P)HX at the expense of ATP, which is converted to ADP. Together with NAD(P)HX epimerase, which catalyzes the epimerization of the S- and R-forms, the enzyme allows the repair of both epimers of NAD(P)HX, a damaged form of NAD(P)H that is a result of enzymatic or heat-dependent hydration. This Danio rerio (Zebrafish) protein is ATP-dependent (S)-NAD(P)H-hydrate dehydratase.